We begin with the raw amino-acid sequence, 72 residues long: Translation initiation factor IF-1 (72 aa).

Residues 1–72 (MAKQSAIEQD…SKGRIVFRYK (72 aa)) enclose the S1-like domain.

This sequence belongs to the IF-1 family. In terms of assembly, component of the 30S ribosomal translation pre-initiation complex which assembles on the 30S ribosome in the order IF-2 and IF-3, IF-1 and N-formylmethionyl-tRNA(fMet); mRNA recruitment can occur at any time during PIC assembly.

The protein resides in the cytoplasm. Functionally, one of the essential components for the initiation of protein synthesis. Stabilizes the binding of IF-2 and IF-3 on the 30S subunit to which N-formylmethionyl-tRNA(fMet) subsequently binds. Helps modulate mRNA selection, yielding the 30S pre-initiation complex (PIC). Upon addition of the 50S ribosomal subunit IF-1, IF-2 and IF-3 are released leaving the mature 70S translation initiation complex. In Bacteroides fragilis (strain ATCC 25285 / DSM 2151 / CCUG 4856 / JCM 11019 / LMG 10263 / NCTC 9343 / Onslow / VPI 2553 / EN-2), this protein is Translation initiation factor IF-1.